A 245-amino-acid polypeptide reads, in one-letter code: Uridylate kinase (245 aa).

12 to 15 (KLSG) is a binding site for ATP. The tract at residues 20 to 25 (GEKGVG) is involved in allosteric activation by GTP. Residue glycine 54 participates in UMP binding. Positions 55 and 59 each coordinate ATP. UMP is bound by residues aspartate 74 and 135–142 (IGSPYFST). 3 residues coordinate ATP: asparagine 163, tyrosine 169, and aspartate 172.

The protein belongs to the UMP kinase family. In terms of assembly, homohexamer.

It is found in the cytoplasm. The catalysed reaction is UMP + ATP = UDP + ADP. The protein operates within pyrimidine metabolism; CTP biosynthesis via de novo pathway; UDP from UMP (UMPK route): step 1/1. With respect to regulation, allosterically activated by GTP. Inhibited by UTP. In terms of biological role, catalyzes the reversible phosphorylation of UMP to UDP. This is Uridylate kinase from Streptococcus thermophilus (strain ATCC BAA-491 / LMD-9).